Here is a 95-residue protein sequence, read N- to C-terminus: Stationary phase-expressed protein 1 (95 aa).

The chain crosses the membrane as a helical span at residues 20–38; it reads FRYIMLGLVGAAVVPTAYM.

The protein resides in the mitochondrion membrane. The chain is Stationary phase-expressed protein 1 (SPG1) from Saccharomyces cerevisiae (strain RM11-1a) (Baker's yeast).